The primary structure comprises 257 residues: Tryptophan synthase alpha chain (257 aa).

Active-site proton acceptor residues include Glu-47 and Asp-58.

It belongs to the TrpA family. Tetramer of two alpha and two beta chains.

It catalyses the reaction (1S,2R)-1-C-(indol-3-yl)glycerol 3-phosphate + L-serine = D-glyceraldehyde 3-phosphate + L-tryptophan + H2O. It functions in the pathway amino-acid biosynthesis; L-tryptophan biosynthesis; L-tryptophan from chorismate: step 5/5. The alpha subunit is responsible for the aldol cleavage of indoleglycerol phosphate to indole and glyceraldehyde 3-phosphate. This is Tryptophan synthase alpha chain from Listeria monocytogenes serotype 4b (strain F2365).